Here is a 325-residue protein sequence, read N- to C-terminus: DNA-directed RNA polymerase subunit alpha (325 aa).

The alpha N-terminal domain (alpha-NTD) stretch occupies residues 1–238 (MSPKNLLKGF…DHLTVFINFE (238 aa)). Residues 255 to 325 (LKAALSKHVE…MGLSFGMRDF (71 aa)) are alpha C-terminal domain (alpha-CTD).

Belongs to the RNA polymerase alpha chain family. In terms of assembly, homodimer. The RNAP catalytic core consists of 2 alpha, 1 beta, 1 beta' and 1 omega subunit. When a sigma factor is associated with the core the holoenzyme is formed, which can initiate transcription.

The enzyme catalyses RNA(n) + a ribonucleoside 5'-triphosphate = RNA(n+1) + diphosphate. Functionally, DNA-dependent RNA polymerase catalyzes the transcription of DNA into RNA using the four ribonucleoside triphosphates as substrates. This Leptospira biflexa serovar Patoc (strain Patoc 1 / Ames) protein is DNA-directed RNA polymerase subunit alpha.